A 548-amino-acid polypeptide reads, in one-letter code: Chaperonin GroEL (548 aa).

Residues 30 to 33, K51, 87 to 91, G415, 479 to 481, and D495 contribute to the ATP site; these read TLGP, DGTTT, and NAA.

This sequence belongs to the chaperonin (HSP60) family. In terms of assembly, forms a cylinder of 14 subunits composed of two heptameric rings stacked back-to-back. Interacts with the co-chaperonin GroES.

The protein localises to the cytoplasm. It carries out the reaction ATP + H2O + a folded polypeptide = ADP + phosphate + an unfolded polypeptide.. Together with its co-chaperonin GroES, plays an essential role in assisting protein folding. The GroEL-GroES system forms a nano-cage that allows encapsulation of the non-native substrate proteins and provides a physical environment optimized to promote and accelerate protein folding. The chain is Chaperonin GroEL from Sodalis glossinidius (strain morsitans).